The sequence spans 424 residues: Proline--tRNA ligase (424 aa).

It belongs to the class-II aminoacyl-tRNA synthetase family. ProS type 2 subfamily. Homodimer.

It localises to the cytoplasm. The enzyme catalyses tRNA(Pro) + L-proline + ATP = L-prolyl-tRNA(Pro) + AMP + diphosphate. In terms of biological role, catalyzes the attachment of proline to tRNA(Pro) in a two-step reaction: proline is first activated by ATP to form Pro-AMP and then transferred to the acceptor end of tRNA(Pro). This is Proline--tRNA ligase from Ehrlichia canis (strain Jake).